The chain runs to 82 residues: UPF0291 protein PEPE_0871 (82 aa).

Belongs to the UPF0291 family.

The protein localises to the cytoplasm. The polypeptide is UPF0291 protein PEPE_0871 (Pediococcus pentosaceus (strain ATCC 25745 / CCUG 21536 / LMG 10740 / 183-1w)).